A 247-amino-acid chain; its full sequence is MWGTSNCACAKFQIRRRYARPYRRRHIRRYRRRRRHFRRRRFTTNRVYTLRLTRQFQFKIQKQTTSVGNLIFNADYITFALDDFLQAVPNPHALNFEDYRIKLAKMEMRPTGGHYTVQSNGFGHTAVIQDSRITKFKTTADQTQDPLAPFDGAKKWFVSRGFKRLLRPKPQITIEDLTTANQSAALWLNSARTGWIPLQGGPNSAGTKVRHYGIAFSFPQPEQTITYVTKLTLYVQFRQFAPNNPST.

The interval 1-40 (MWGTSNCACAKFQIRRRYARPYRRRHIRRYRRRRRHFRRR) is DNA-binding. The interval 15-44 (RRRYARPYRRRHIRRYRRRRRHFRRRRFTT) is nuclear localization signals.

The protein belongs to the circoviridae capsid protein family. In terms of assembly, homomultimer. Assembles in the nucleus, presumably in an immature form, then migrates to the cytoplasm once assembled as mature virion. Interacts with Rep; this interaction relocates Rep into the nucleus.

Its subcellular location is the host nucleus. The protein resides in the virion. Functionally, self-assembles to form the virion icosahedral capsid with a T=1 symmetry. This very small capsid (17 - 22 nm in diameter) allows the virus to be very stable in the environment and resistant to some disinfectants, including detergents. Essential for the initial attachment to heparan sulfate moieties and chondroitin sulfate B of the host cell surface proteoglycans. After attachment, the virus is endocytosed and traffics to the nucleus. The capsid protein binds and transports the viral genome and Rep across the nuclear envelope. In Beak and feather disease virus (BFDV), this protein is Capsid protein (Cap).